We begin with the raw amino-acid sequence, 585 residues long: Exonuclease V, mitochondrial (585 aa).

A mitochondrion-targeting transit peptide spans 1–26 (MLGRTLINKHGFLIHPRRFVHLNDKS). Residues cysteine 141, cysteine 549, cysteine 552, and cysteine 558 each contribute to the [4Fe-4S] cluster site.

This sequence belongs to the EXO5 family. In terms of assembly, monomer. The cofactor is Mg(2+). [4Fe-4S] cluster is required as a cofactor.

Its subcellular location is the mitochondrion. Single strand DNA specific 5' exonuclease involved in mitochondrial DNA replication and recombination. Releases dinucleotides as main products of catalysis. Has the capacity to slide across 5'double-stranded DNA or 5'RNA sequences and resumes cutting two nucleotides downstream of the double-stranded-to-single-stranded junction or RNA-to-DNA junction, respectively. This chain is Exonuclease V, mitochondrial (EXO5), found in Saccharomyces cerevisiae (strain Lalvin EC1118 / Prise de mousse) (Baker's yeast).